The chain runs to 713 residues: Probable glutamate carboxypeptidase VP8 (713 aa).

Topologically, residues 1–10 (MPHSVLARLP) are cytoplasmic. A helical; Signal-anchor for type II membrane protein membrane pass occupies residues 11–31 (PGSVRLVAAFGLLLLVSLLVL). Over 32–713 (HRRPGRPHVA…PTNFSSLVTP (682 aa)) the chain is Extracellular. N66 and N311 each carry an N-linked (GlcNAc...) asparagine glycan. The interval 245 to 539 (ATSGAERLKF…EIWGLLALRL (295 aa)) is catalytic. Zn(2+) is bound by residues H345 and D355. E392 (nucleophile) is an active-site residue. Residues E393, D421, and H505 each coordinate Zn(2+). N-linked (GlcNAc...) asparagine glycans are attached at residues N667 and N706.

It belongs to the peptidase M28 family. M28B subfamily. Zn(2+) is required as a cofactor.

It localises to the cell membrane. It catalyses the reaction Release of an unsubstituted, C-terminal glutamyl residue, typically from Ac-Asp-Glu or folylpoly-gamma-glutamates.. Involved in the regulation of meristem development and seed maturation processes. Mediates regulation of embryonic regulatory genes and genes controlling abscisic acid (ABA) biosynthesis and turnover in developing seeds. May be required for the synthesis of small signaling molecules that integrates meristem and embryo formation in seeds. The polypeptide is Probable glutamate carboxypeptidase VP8 (Zea mays (Maize)).